Reading from the N-terminus, the 447-residue chain is Putative short-chain fatty acid transporter (447 aa).

Transmembrane regions (helical) follow at residues 17–37 (LPDPLIFAVLLTFVTFICAWG), 49–69 (MWGNGFWNLLGFGMQMALIVV), 98–118 (VVLVTFMGSIACIINWGFGLV), 136–156 (YALLIACAYIAFMTWGGGFSG), 188–208 (TLFSGYNIFITLSLVICLPFI), 252–272 (FLAYTIGALGYSYLGMYFYKN), 284–304 (IFLITGIVLHGSPMAYMRAII), 321–341 (AGVQLMMEHSGLGGLITEFFI), 359–379 (FINFAVPSGGGHWVIQGPFVI), 402–422 (WMNMAQPFWALPALGIAGLGV), and 427–447 (GFCMTALIFTAPIFIIGLYFL).

Its subcellular location is the cell inner membrane. Its function is as follows. May be responsible for the uptake of short-chain fatty acids. The chain is Putative short-chain fatty acid transporter (atoE) from Haemophilus influenzae (strain ATCC 51907 / DSM 11121 / KW20 / Rd).